The sequence spans 810 residues: DNA gyrase subunit A (810 aa).

The region spanning 36–502 (LPDVRDGLKP…EVLKTSMSDL (467 aa)) is the Topo IIA-type catalytic domain. Catalysis depends on Tyr124, which acts as the O-(5'-phospho-DNA)-tyrosine intermediate. A GyrA-box motif is present at residues 529-535 (QGIGGKG).

It belongs to the type II topoisomerase GyrA/ParC subunit family. As to quaternary structure, heterotetramer, composed of two GyrA and two GyrB chains. In the heterotetramer, GyrA contains the active site tyrosine that forms a transient covalent intermediate with DNA, while GyrB binds cofactors and catalyzes ATP hydrolysis.

Its subcellular location is the cytoplasm. The catalysed reaction is ATP-dependent breakage, passage and rejoining of double-stranded DNA.. In terms of biological role, a type II topoisomerase that negatively supercoils closed circular double-stranded (ds) DNA in an ATP-dependent manner to modulate DNA topology and maintain chromosomes in an underwound state. Negative supercoiling favors strand separation, and DNA replication, transcription, recombination and repair, all of which involve strand separation. Also able to catalyze the interconversion of other topological isomers of dsDNA rings, including catenanes and knotted rings. Type II topoisomerases break and join 2 DNA strands simultaneously in an ATP-dependent manner. This chain is DNA gyrase subunit A, found in Borrelia hermsii (strain HS1 / DAH).